The sequence spans 370 residues: Histidinol-phosphate aminotransferase (370 aa).

Lys-229 bears the N6-(pyridoxal phosphate)lysine mark.

It belongs to the class-II pyridoxal-phosphate-dependent aminotransferase family. Histidinol-phosphate aminotransferase subfamily. As to quaternary structure, homodimer. The cofactor is pyridoxal 5'-phosphate.

The catalysed reaction is L-histidinol phosphate + 2-oxoglutarate = 3-(imidazol-4-yl)-2-oxopropyl phosphate + L-glutamate. It participates in amino-acid biosynthesis; L-histidine biosynthesis; L-histidine from 5-phospho-alpha-D-ribose 1-diphosphate: step 7/9. The polypeptide is Histidinol-phosphate aminotransferase (Helicobacter hepaticus (strain ATCC 51449 / 3B1)).